Reading from the N-terminus, the 210-residue chain is Thiamine-phosphate synthase (210 aa).

4-amino-2-methyl-5-(diphosphooxymethyl)pyrimidine contacts are provided by residues 36 to 40 (QLRIK) and N68. Positions 69 and 88 each coordinate Mg(2+). A 4-amino-2-methyl-5-(diphosphooxymethyl)pyrimidine-binding site is contributed by S107. 133–135 (TQT) is a 2-[(2R,5Z)-2-carboxy-4-methylthiazol-5(2H)-ylidene]ethyl phosphate binding site. K136 is a binding site for 4-amino-2-methyl-5-(diphosphooxymethyl)pyrimidine. 2-[(2R,5Z)-2-carboxy-4-methylthiazol-5(2H)-ylidene]ethyl phosphate contacts are provided by residues G165 and 185-186 (VS).

It belongs to the thiamine-phosphate synthase family. The cofactor is Mg(2+).

The enzyme catalyses 2-[(2R,5Z)-2-carboxy-4-methylthiazol-5(2H)-ylidene]ethyl phosphate + 4-amino-2-methyl-5-(diphosphooxymethyl)pyrimidine + 2 H(+) = thiamine phosphate + CO2 + diphosphate. It catalyses the reaction 2-(2-carboxy-4-methylthiazol-5-yl)ethyl phosphate + 4-amino-2-methyl-5-(diphosphooxymethyl)pyrimidine + 2 H(+) = thiamine phosphate + CO2 + diphosphate. It carries out the reaction 4-methyl-5-(2-phosphooxyethyl)-thiazole + 4-amino-2-methyl-5-(diphosphooxymethyl)pyrimidine + H(+) = thiamine phosphate + diphosphate. It functions in the pathway cofactor biosynthesis; thiamine diphosphate biosynthesis; thiamine phosphate from 4-amino-2-methyl-5-diphosphomethylpyrimidine and 4-methyl-5-(2-phosphoethyl)-thiazole: step 1/1. Condenses 4-methyl-5-(beta-hydroxyethyl)thiazole monophosphate (THZ-P) and 2-methyl-4-amino-5-hydroxymethyl pyrimidine pyrophosphate (HMP-PP) to form thiamine monophosphate (TMP). The polypeptide is Thiamine-phosphate synthase (Cronobacter sakazakii (strain ATCC BAA-894) (Enterobacter sakazakii)).